The following is a 404-amino-acid chain: Chorismate synthase (404 aa).

Arginine 40 and arginine 46 together coordinate NADP(+). Residues 135–137 (RAS), 256–257 (QA), glycine 300, 315–319 (KPIST), and arginine 341 contribute to the FMN site.

It belongs to the chorismate synthase family. In terms of assembly, homotetramer. FMNH2 is required as a cofactor.

It carries out the reaction 5-O-(1-carboxyvinyl)-3-phosphoshikimate = chorismate + phosphate. It functions in the pathway metabolic intermediate biosynthesis; chorismate biosynthesis; chorismate from D-erythrose 4-phosphate and phosphoenolpyruvate: step 7/7. Its function is as follows. Catalyzes the anti-1,4-elimination of the C-3 phosphate and the C-6 proR hydrogen from 5-enolpyruvylshikimate-3-phosphate (EPSP) to yield chorismate, which is the branch point compound that serves as the starting substrate for the three terminal pathways of aromatic amino acid biosynthesis. This reaction introduces a second double bond into the aromatic ring system. The polypeptide is Chorismate synthase (Mycobacterium sp. (strain JLS)).